Consider the following 99-residue polypeptide: NADH-quinone oxidoreductase subunit K (99 aa).

3 helical membrane-spanning segments follow: residues 3–23 (VTAYVVLSGILFTIGCVGVLI), 28–48 (IVVFMCVELMLNASNLALVAF), and 59–79 (IAAFFVMVVAAAEVVVGLAII).

The protein belongs to the complex I subunit 4L family. NDH-1 is composed of 14 different subunits. Subunits NuoA, H, J, K, L, M, N constitute the membrane sector of the complex.

It localises to the cell membrane. It catalyses the reaction a quinone + NADH + 5 H(+)(in) = a quinol + NAD(+) + 4 H(+)(out). NDH-1 shuttles electrons from NADH, via FMN and iron-sulfur (Fe-S) centers, to quinones in the respiratory chain. The immediate electron acceptor for the enzyme in this species is believed to be a menaquinone. Couples the redox reaction to proton translocation (for every two electrons transferred, four hydrogen ions are translocated across the cytoplasmic membrane), and thus conserves the redox energy in a proton gradient. The protein is NADH-quinone oxidoreductase subunit K of Nocardioides sp. (strain ATCC BAA-499 / JS614).